The primary structure comprises 224 residues: Urease accessory protein UreF (224 aa).

The protein belongs to the UreF family. In terms of assembly, ureD, UreF and UreG form a complex that acts as a GTP-hydrolysis-dependent molecular chaperone, activating the urease apoprotein by helping to assemble the nickel containing metallocenter of UreC. The UreE protein probably delivers the nickel.

It is found in the cytoplasm. Functionally, required for maturation of urease via the functional incorporation of the urease nickel metallocenter. This is Urease accessory protein UreF from Enterobacter sp. (strain 638).